Consider the following 267-residue polypeptide: Acetyl-coenzyme A carboxylase carboxyl transferase subunit beta 1 (267 aa).

The CoA carboxyltransferase N-terminal domain occupies 9-267 (TWQACPKCGR…NYGIGRSAHG (259 aa)). Residues Cys13, Cys16, Cys31, and Cys34 each coordinate Zn(2+). The C4-type zinc finger occupies 13–34 (CPKCGRHVHQRQWGTYQQCPYC).

This sequence belongs to the AccD/PCCB family. As to quaternary structure, acetyl-CoA carboxylase is a heterohexamer composed of biotin carboxyl carrier protein (AccB), biotin carboxylase (AccC) and two subunits each of ACCase subunit alpha (AccA) and ACCase subunit beta (AccD). Requires Zn(2+) as cofactor.

The protein localises to the cytoplasm. The catalysed reaction is N(6)-carboxybiotinyl-L-lysyl-[protein] + acetyl-CoA = N(6)-biotinyl-L-lysyl-[protein] + malonyl-CoA. The protein operates within lipid metabolism; malonyl-CoA biosynthesis; malonyl-CoA from acetyl-CoA: step 1/1. In terms of biological role, component of the acetyl coenzyme A carboxylase (ACC) complex. Biotin carboxylase (BC) catalyzes the carboxylation of biotin on its carrier protein (BCCP) and then the CO(2) group is transferred by the transcarboxylase to acetyl-CoA to form malonyl-CoA. The protein is Acetyl-coenzyme A carboxylase carboxyl transferase subunit beta 1 of Lactiplantibacillus plantarum (strain ATCC BAA-793 / NCIMB 8826 / WCFS1) (Lactobacillus plantarum).